The primary structure comprises 319 residues: Probable enoyl-CoA hydratase alpha subunit (319 aa).

Residues 199–298 are DUF35; sequence FEAAKQRRLV…EIGMPVVLDW (100 aa).

It belongs to the thioester dehydratase family. In terms of assembly, heterodimer composed of ChsH1 and ChsH2. Two heterodimers combine to form a heterotetramer. The complex interacts with Ltp2 via the DUF35 C-terminal region of ChsH2.

Functionally, probably involved in bile acid degradation. The protein is Probable enoyl-CoA hydratase alpha subunit of Thermomonospora curvata (strain ATCC 19995 / DSM 43183 / JCM 3096 / KCTC 9072 / NBRC 15933 / NCIMB 10081 / Henssen B9).